The sequence spans 841 residues: Putative helicase R592 (841 aa).

A Helicase ATP-binding domain is found at 72-309 (STFVIETNSA…RRYVNKIFGQ (238 aa)). Residue 85 to 92 (DKVGAGKT) participates in ATP binding. Positions 195–205 (KLPVKTTKKGG) are enriched in basic residues. Residues 195–215 (KLPVKTTKKGGSKTQNKAQND) are disordered. The segment covering 206 to 215 (SKTQNKAQND) has biased composition (polar residues). The short motif at 266–269 (DEMD) is the DEAD box element. Residues 413 to 450 (QDVDAHENRKKNIMNNIARCKTKLESIKEKINSIKDEC) adopt a coiled-coil conformation. An RING-type; degenerate zinc finger spans residues 451–491 (CFICTDPFENPTIMNCCKSIFCLKCLLTTLKTVGSKCPYCR). The region spanning 531–682 (VLEQVLSYIS…WMITNPTDLN (152 aa)) is the Helicase C-terminal domain. The disordered stretch occupies residues 678–841 (PTDLNEEPDE…KAPVRKLIKV (164 aa)). Positions 681 to 697 (LNEEPDEESDEGSDEDV) are enriched in acidic residues. A compositionally biased stretch (basic and acidic residues) spans 698 to 725 (EKSKDKKSSDKKSSDKKKSEKKSSDKKS). Over residues 726 to 749 (SNKKNSKKKTYVKPKSSKKTSQKV) the composition is skewed to basic residues. Composition is skewed to acidic residues over residues 765-774 (DSDDLDDSDD) and 782-804 (SDSD…ESEI). 2 stretches are compositionally biased toward basic residues: residues 809–821 (KSKK…KKNK) and 828–841 (TLKK…LIKV).

This is Putative helicase R592 from Acanthamoeba polyphaga mimivirus (APMV).